The chain runs to 228 residues: L-ribulose-5-phosphate 4-epimerase UlaF (228 aa).

Substrate-binding positions include 26-27 (GN), 43-44 (SG), and 72-73 (SS). Zn(2+)-binding residues include Asp74, His93, and His95. The active-site Proton donor/acceptor is the Asp118. His167 contributes to the Zn(2+) binding site. The active-site Proton donor/acceptor is Tyr225.

It belongs to the aldolase class II family. AraD/FucA subfamily. Zn(2+) is required as a cofactor.

It carries out the reaction L-ribulose 5-phosphate = D-xylulose 5-phosphate. It participates in cofactor degradation; L-ascorbate degradation; D-xylulose 5-phosphate from L-ascorbate: step 4/4. Catalyzes the isomerization of L-ribulose 5-phosphate to D-xylulose 5-phosphate. Is involved in the anaerobic L-ascorbate utilization. In Escherichia coli (strain ATCC 8739 / DSM 1576 / NBRC 3972 / NCIMB 8545 / WDCM 00012 / Crooks), this protein is L-ribulose-5-phosphate 4-epimerase UlaF.